The primary structure comprises 563 residues: Methylcrotonoyl-CoA carboxylase beta chain, mitochondrial (563 aa).

The N-terminal 22 residues, 1–22 (MWGALRSVLRPCSRASVPRQRA), are a transit peptide targeting the mitochondrion. A CoA carboxyltransferase N-terminal domain is found at 49 to 306 (MKALVNQLHE…QKKLDVTVEP (258 aa)). The interval 49–555 (MKALVNQLHE…SAALNAPIQR (507 aa)) is carboxyltransferase. K70 is modified (N6-acetyllysine; alternate). An N6-succinyllysine; alternate modification is found at K70. The residue at position 141 (K141) is an N6-succinyllysine. The 247-residue stretch at 309–555 (EPLFPADELY…SAALNAPIQR (247 aa)) folds into the CoA carboxyltransferase C-terminal domain. Positions 343-372 (RFNEFKALYGDTLVTGFARIFGYPVGIIGN) are acyl-CoA binding. Position 433 is an N6-succinyllysine (K433). N6-acetyllysine; alternate is present on K495. An N6-succinyllysine; alternate modification is found at K495. N6-acetyllysine is present on K511.

Belongs to the AccD/PCCB family. Probably a dodecamer composed of six biotin-containing alpha subunits (MCCC1) and six beta (MCCC2) subunits.

Its subcellular location is the mitochondrion matrix. It catalyses the reaction 3-methylbut-2-enoyl-CoA + hydrogencarbonate + ATP = 3-methyl-(2E)-glutaconyl-CoA + ADP + phosphate + H(+). It functions in the pathway amino-acid degradation; L-leucine degradation; (S)-3-hydroxy-3-methylglutaryl-CoA from 3-isovaleryl-CoA: step 2/3. Its function is as follows. Carboxyltransferase subunit of the 3-methylcrotonyl-CoA carboxylase, an enzyme that catalyzes the conversion of 3-methylcrotonyl-CoA to 3-methylglutaconyl-CoA, a critical step for leucine and isovaleric acid catabolism. The chain is Methylcrotonoyl-CoA carboxylase beta chain, mitochondrial (Mccc2) from Rattus norvegicus (Rat).